The sequence spans 63 residues: Beta-defensin 35 (63 aa).

The signal sequence occupies residues 1 to 23 (MPQTFFVFCFLFFVFLQLFPGTG). 3 cysteine pairs are disulfide-bonded: Cys31/Cys58, Cys38/Cys52, and Cys42/Cys59.

The protein belongs to the beta-defensin family. In terms of tissue distribution, expressed in testis, epididymis (caput, corpus and cauda), kidney and neonatal and adult brain.

Its subcellular location is the secreted. In terms of biological role, has antibacterial activity. The protein is Beta-defensin 35 (Defb35) of Mus musculus (Mouse).